Consider the following 309-residue polypeptide: uncharacterized protein (309 aa).

This sequence belongs to the OprB family.

This is an uncharacterized protein from Aquifex aeolicus (strain VF5).